The sequence spans 428 residues: Synaptotagmin-1 (428 aa).

The Vesicular portion of the chain corresponds to 1-67 (MDSLLARVKR…KDKLINEIEN (67 aa)). The segment at 16-50 (ALNPAQEGVTGGPDAAGLPDVSTSSPGGGGAGDKL) is disordered. Residues 68-92 (LPIWAIVLIIAGSLLFLVCCVYCVC) form a helical membrane-spanning segment. The Cytoplasmic segment spans residues 93–428 (RRSCRKRKKK…HTLQEVPEKN (336 aa)). Position 123 is a phosphoserine; by PRKC2 (S123). The interval 147–395 (STKSEVKLGK…PIGRCVLGCN (249 aa)) is phospholipid binding. 2 C2 domains span residues 153-272 (KLGK…EDWK) and 286-419 (KLGD…AQWH). Residues D184, D190, D242, F243, D244, S247, K248, D250, D317, D323, D377, and D379 each contribute to the Ca(2+) site.

The protein belongs to the synaptotagmin family. Binds SNAP25. Isoform 3 binds SNAP25 with higher affinity. Requires Ca(2+) as cofactor.

Its subcellular location is the cytoplasmic vesicle. The protein resides in the secretory vesicle. It is found in the synaptic vesicle membrane. The protein localises to the synapse. Acts as inhibitor of neurotransmitter release. Overexpression leads to a decrease in the amplitude of the excitatory postsynaptic potential in dissected cholinergic and glutaminergic neurons while depletion with antisense oligonucleotides leads to an increase. Overexpression of isoform 1 blocks the reversal of synaptic depression by serotonin in sensory neurons. The polypeptide is Synaptotagmin-1 (SYT1) (Aplysia californica (California sea hare)).